The sequence spans 107 residues: MIDIEVLHRVAATLAERKKADPDSSYVSSLYAKGTDAICKKVAEEAAETIMAAKDKDMLHIVWEVTDLWFHSMVLLSHFGLSVDDVLAEFRRREGVSGIDEKKSRKN.

It belongs to the PRA-PH family.

It is found in the cytoplasm. It catalyses the reaction 1-(5-phospho-beta-D-ribosyl)-ATP + H2O = 1-(5-phospho-beta-D-ribosyl)-5'-AMP + diphosphate + H(+). It functions in the pathway amino-acid biosynthesis; L-histidine biosynthesis; L-histidine from 5-phospho-alpha-D-ribose 1-diphosphate: step 2/9. This chain is Phosphoribosyl-ATP pyrophosphatase, found in Azoarcus sp. (strain BH72).